Here is a 379-residue protein sequence, read N- to C-terminus: Probable peptidoglycan glycosyltransferase FtsW (379 aa).

The Cytoplasmic segment spans residues 1 to 15; it reads MHKTEAQTYLLYDRT. The chain crosses the membrane as a helical span at residues 16–36; that stretch reads LLLLTMGLVGIGLVMVISTSM. Over 37–52 the chain is Periplasmic; sequence PIGVRLSEDPFYFARR. A helical membrane pass occupies residues 53-73; sequence YAFYLGLAVVLSLVTLGIPMA. Residues 74 to 79 lie on the Cytoplasmic side of the membrane; the sequence is SWQRGS. The helical transmembrane segment at 80 to 100 threads the bilayer; the sequence is SLILLITLIMLLLVLIAGQSV. The Periplasmic segment spans residues 101–113; sequence NGAVRWLALGPWR. A helical membrane pass occupies residues 114–133; sequence IQPAELSKLALFCYLASYLV. Over 134 to 139 the chain is Cytoplasmic; that stretch reads RKAEEV. Residues 140-162 form a helical membrane-spanning segment; the sequence is RTNFWGFCKPIGVMVLLAILLLA. Over 163–165 the chain is Periplasmic; it reads QPD. The chain crosses the membrane as a helical span at residues 166 to 183; it reads LGTVLVLFITTLAMLFLA. The Cytoplasmic portion of the chain corresponds to 184-186; that stretch reads EAK. The helical transmembrane segment at 187 to 207 threads the bilayer; it reads IWQFLPIIGTGILAVMLLIIA. The Periplasmic segment spans residues 208–269; the sequence is KPYRRRRVTS…TEAHTDFICS (62 aa). A helical membrane pass occupies residues 270–290; the sequence is ILGEELGYFGVLLALLMVFLV. Topologically, residues 291-301 are cytoplasmic; the sequence is AFRAMSIGRKA. Residues 302-322 form a helical membrane-spanning segment; that stretch reads LAINQIFSGFLACSIGIWFSF. At 323-342 the chain is on the periplasmic side; that stretch reads QTMVNVGAAAGMLPTKGLTL. A helical membrane pass occupies residues 343 to 363; it reads PFISYGGSSMLIMLTAIVLLI. Residues 364 to 379 lie on the Cytoplasmic side of the membrane; that stretch reads RIDFETRLAKLQAFVR.

The protein belongs to the SEDS family. FtsW subfamily.

Its subcellular location is the cell inner membrane. It catalyses the reaction [GlcNAc-(1-&gt;4)-Mur2Ac(oyl-L-Ala-gamma-D-Glu-L-Lys-D-Ala-D-Ala)](n)-di-trans,octa-cis-undecaprenyl diphosphate + beta-D-GlcNAc-(1-&gt;4)-Mur2Ac(oyl-L-Ala-gamma-D-Glu-L-Lys-D-Ala-D-Ala)-di-trans,octa-cis-undecaprenyl diphosphate = [GlcNAc-(1-&gt;4)-Mur2Ac(oyl-L-Ala-gamma-D-Glu-L-Lys-D-Ala-D-Ala)](n+1)-di-trans,octa-cis-undecaprenyl diphosphate + di-trans,octa-cis-undecaprenyl diphosphate + H(+). The protein operates within cell wall biogenesis; peptidoglycan biosynthesis. Functionally, peptidoglycan polymerase that is essential for cell division. This is Probable peptidoglycan glycosyltransferase FtsW from Moranella endobia (strain PCIT).